The sequence spans 185 residues: Ribosome-recycling factor (185 aa).

It belongs to the RRF family.

It is found in the cytoplasm. Responsible for the release of ribosomes from messenger RNA at the termination of protein biosynthesis. May increase the efficiency of translation by recycling ribosomes from one round of translation to another. In Pseudomonas putida (strain GB-1), this protein is Ribosome-recycling factor.